A 339-amino-acid polypeptide reads, in one-letter code: Dihydroorotate dehydrogenase (quinone) (339 aa).

Residues 62–66 (AGMDK) and Thr86 each bind FMN. A substrate-binding site is contributed by Lys66. A substrate-binding site is contributed by 111–115 (NRMGF). Residues Asn139 and Asn172 each contribute to the FMN site. Asn172 serves as a coordination point for substrate. The Nucleophile role is filled by Ser175. Asn177 contributes to the substrate binding site. Residues Lys217 and Thr245 each contribute to the FMN site. 246–247 (NT) provides a ligand contact to substrate. Residues Gly268, Gly297, and 318-319 (YS) each bind FMN.

Belongs to the dihydroorotate dehydrogenase family. Type 2 subfamily. Monomer. The cofactor is FMN.

It localises to the cell membrane. It carries out the reaction (S)-dihydroorotate + a quinone = orotate + a quinol. Its pathway is pyrimidine metabolism; UMP biosynthesis via de novo pathway; orotate from (S)-dihydroorotate (quinone route): step 1/1. Functionally, catalyzes the conversion of dihydroorotate to orotate with quinone as electron acceptor. The polypeptide is Dihydroorotate dehydrogenase (quinone) (Shewanella pealeana (strain ATCC 700345 / ANG-SQ1)).